The chain runs to 161 residues: Myosin regulatory light chain (161 aa).

Residues Ser-13 and Ser-14 each carry the phosphoserine modification. 3 EF-hand domains span residues 20-55 (EQVA…FGVF), 56-91 (VMED…RMKQ), and 93-128 (SNEQ…LGDK).

Myosin is a hexamer of 2 heavy chains and 4 light chains (two regulatory light chains and two essential light chains).

The chain is Myosin regulatory light chain (mlcR) from Dictyostelium discoideum (Social amoeba).